The chain runs to 445 residues: UDP-N-acetylglucosamine--peptide N-acetylglucosaminyltransferase stabilizing protein GtfB (445 aa).

Positions 55–171 (KPLYFNQVPV…TLPGQSMRYF (117 aa)) are glycosyltransferase 1.

The protein belongs to the GtfB family. In terms of assembly, interacts with glycosyltransferase GtfA; probably forms a heterotetramer with 2 subunits each of GtfA and GtfB. Part of the accessory SecA2/SecY2 protein translocation apparatus.

It is found in the cell membrane. It functions in the pathway protein modification; protein glycosylation. Functionally, required for the polymorphic O-glycosylation of the serine-rich repeat protein PsrP. A stabilizing protein that is part of the accessory SecA2/SecY2 system specifically required to export serine-rich repeat cell wall proteins encoded upstream in the same operon. The GtfA-GtfB complex adds GlcNAc from UDP-GlcNAc to PsrP, attaching the first sugar residue. Stabilizes the glycosylation activity of GtfA. Has no N-acetylglucosaminyl transferase activity on its own. This is UDP-N-acetylglucosamine--peptide N-acetylglucosaminyltransferase stabilizing protein GtfB from Streptococcus pneumoniae serotype 4 (strain ATCC BAA-334 / TIGR4).